The primary structure comprises 457 residues: SH3 domain-binding protein 5 (457 aa).

Residues 1–12 (MDTALKRSRSEE) show a composition bias toward basic and acidic residues. A disordered region spans residues 1–68 (MDTALKRSRS…DDINRRETEL (68 aa)). Residues 25–43 (EKEEEEERMEQGLEEEEEV) show a composition bias toward acidic residues. Residues 33 to 267 (MEQGLEEEEE…EIHERRRSNA (235 aa)) are sufficient for interaction with RAB11A and for guanine nucleotide exchange activity. The segment covering 44-53 (DPRIQGELEK) has biased composition (basic and acidic residues). Coiled-coil stretches lie at residues 46-92 (RIQG…LAKK), 99-147 (DSKP…RLLE), 156-202 (AWQE…LEKK), and 213-257 (YFEL…RISD). The span at 308–319 (NCGNLVSEDDSE) shows a compositional bias: acidic residues. Positions 308-347 (NCGNLVSEDDSETQSVSSFSSGPTSPSEMPDQFPAVARPG) are disordered. A compositionally biased stretch (low complexity) spans 322 to 334 (SVSSFSSGPTSPS). Residue Ser-353 is modified to Phosphoserine; by MAPK12 and MAPK9. Residues 371-427 (SECSGASSPECEVERGDRAEGAENKMSDKANNNRVLSSTSAGGGRSRSQSSTSLEGQ) form a disordered region. 2 positions are modified to phosphoserine: Ser-377 and Ser-378. Residues 382-398 (EVERGDRAEGAENKMSD) are compositionally biased toward basic and acidic residues. Residues 406-427 (LSSTSAGGGRSRSQSSTSLEGQ) are compositionally biased toward low complexity. Ser-420 carries the phosphoserine modification. Ser-423 carries the phosphoserine; by MAPK12 modification.

This sequence belongs to the SH3BP5 family. In terms of assembly, interacts with BTK. Interacts with all isoforms of MAPK8, MAPK9, MAPK10 and MAPK12. Interacts with GDP-bound and nucleotide-free forms of RAB11A.

The protein resides in the cytoplasmic vesicle membrane. Its subcellular location is the mitochondrion. In terms of biological role, functions as a guanine nucleotide exchange factor (GEF) with specificity for RAB11A and RAB25. Inhibits the auto- and transphosphorylation activity of BTK. Plays a negative regulatory role in BTK-related cytoplasmic signaling in B-cells. May be involved in BCR-induced apoptotic cell death. The sequence is that of SH3 domain-binding protein 5 (Sh3bp5) from Rattus norvegicus (Rat).